The following is a 272-amino-acid chain: Cell division protein FtsQ (272 aa).

Residues 1-43 (MEYNPPNTRERIAARRQRLRQPSSEPAIPGWRRRFIDGLQSGR) are Cytoplasmic-facing. The chain crosses the membrane as a helical span at residues 44–64 (IVSGAVFVVSCLALFYVLFSS). Residues 65 to 272 (QFRVQTVEVV…FYQNRTDGRS (208 aa)) lie on the Extracellular side of the membrane. One can recognise a POTRA domain in the interval 66–133 (FRVQTVEVVG…DRARIVIVER (68 aa)).

This sequence belongs to the FtsQ/DivIB family. FtsQ subfamily.

It is found in the cell membrane. Functionally, essential cell division protein. This Chloroflexus aggregans (strain MD-66 / DSM 9485) protein is Cell division protein FtsQ.